Consider the following 660-residue polypeptide: DNA ligase (660 aa).

Residues 33 to 37, 82 to 83, and Glu110 contribute to the NAD(+) site; these read DFVYD and SL. Lys112 (N6-AMP-lysine intermediate) is an active-site residue. NAD(+) contacts are provided by Arg133, Glu167, Lys281, and Lys305. The Zn(2+) site is built by Cys396, Cys399, Cys412, and Cys417. The BRCT domain maps to 583–660; sequence DENRLLAGKK…SFEDIKSYLN (78 aa).

The protein belongs to the NAD-dependent DNA ligase family. LigA subfamily. It depends on Mg(2+) as a cofactor. The cofactor is Mn(2+).

It carries out the reaction NAD(+) + (deoxyribonucleotide)n-3'-hydroxyl + 5'-phospho-(deoxyribonucleotide)m = (deoxyribonucleotide)n+m + AMP + beta-nicotinamide D-nucleotide.. Its function is as follows. DNA ligase that catalyzes the formation of phosphodiester linkages between 5'-phosphoryl and 3'-hydroxyl groups in double-stranded DNA using NAD as a coenzyme and as the energy source for the reaction. It is essential for DNA replication and repair of damaged DNA. This Borrelia garinii subsp. bavariensis (strain ATCC BAA-2496 / DSM 23469 / PBi) (Borreliella bavariensis) protein is DNA ligase.